Here is a 150-residue protein sequence, read N- to C-terminus: Ribosomal RNA large subunit methyltransferase H (150 aa).

Residues A100 and 118-123 (LSEMTF) each bind S-adenosyl-L-methionine.

The protein belongs to the RNA methyltransferase RlmH family. In terms of assembly, homodimer.

Its subcellular location is the cytoplasm. The enzyme catalyses pseudouridine(1915) in 23S rRNA + S-adenosyl-L-methionine = N(3)-methylpseudouridine(1915) in 23S rRNA + S-adenosyl-L-homocysteine + H(+). Its function is as follows. Specifically methylates the pseudouridine at position 1915 (m3Psi1915) in 23S rRNA. In Helicobacter pylori (strain J99 / ATCC 700824) (Campylobacter pylori J99), this protein is Ribosomal RNA large subunit methyltransferase H.